The primary structure comprises 264 residues: Virulence plasmid protein pGP3-D (264 aa).

The protein is Virulence plasmid protein pGP3-D of Chlamydia psittaci (Chlamydophila psittaci).